A 546-amino-acid chain; its full sequence is Mitochondrial distribution and morphology protein 34 (546 aa).

An SMP-LTD domain is found at 1–195; that stretch reads MAFNFNWSPL…LPAIIHRLSL (195 aa). 5 disordered regions span residues 208–230, 299–319, 344–382, 395–416, and 517–546; these read EVKA…QDPV, SHGG…SHVA, TMGA…CTDS, SSSA…SPDA, and RRIQ…AYGQ. Basic residues predominate over residues 349–362; it reads RHPRTRPSRKHKRR. The span at 363–374 shows a compositional bias: basic and acidic residues; the sequence is VVDLRKPQKLDD.

It belongs to the MDM34 family. In terms of assembly, component of the ER-mitochondria encounter structure (ERMES) or MDM complex, composed of MMM1, MDM10, MDM12 and MDM34.

The protein resides in the mitochondrion outer membrane. In terms of biological role, component of the ERMES/MDM complex, which serves as a molecular tether to connect the endoplasmic reticulum (ER) and mitochondria. Components of this complex are involved in the control of mitochondrial shape and protein biogenesis, and function in nonvesicular lipid trafficking between the ER and mitochondria. MDM34 is required for the interaction of the ER-resident membrane protein MMM1 and the outer mitochondrial membrane-resident beta-barrel protein MDM10. This chain is Mitochondrial distribution and morphology protein 34, found in Arthroderma otae (strain ATCC MYA-4605 / CBS 113480) (Microsporum canis).